The following is a 396-amino-acid chain: Elongation factor Tu (396 aa).

The tr-type G domain occupies 10–206 (KPHVNVGTIG…ALDTYIPTPE (197 aa)). Residues 19 to 26 (GHVDHGKT) form a G1 region. Position 19 to 26 (19 to 26 (GHVDHGKT)) interacts with GTP. Thr26 serves as a coordination point for Mg(2+). A G2 region spans residues 60 to 64 (GITIN). Residues 81-84 (DCPG) form a G3 region. GTP contacts are provided by residues 81–85 (DCPGH) and 136–139 (NKCD). The segment at 136 to 139 (NKCD) is G4. The interval 174–176 (SAK) is G5.

This sequence belongs to the TRAFAC class translation factor GTPase superfamily. Classic translation factor GTPase family. EF-Tu/EF-1A subfamily. Monomer.

It is found in the cytoplasm. It catalyses the reaction GTP + H2O = GDP + phosphate + H(+). Its function is as follows. GTP hydrolase that promotes the GTP-dependent binding of aminoacyl-tRNA to the A-site of ribosomes during protein biosynthesis. This chain is Elongation factor Tu, found in Paraburkholderia xenovorans (strain LB400).